A 638-amino-acid chain; its full sequence is 1-deoxy-D-xylulose-5-phosphate synthase (638 aa).

Residues H76 and A117–S119 contribute to the thiamine diphosphate site. Residue D148 coordinates Mg(2+). Residues G149–S150, N177, Y287, and E369 each bind thiamine diphosphate. Residue N177 participates in Mg(2+) binding.

The protein belongs to the transketolase family. DXPS subfamily. Homodimer. Requires Mg(2+) as cofactor. The cofactor is thiamine diphosphate.

The enzyme catalyses D-glyceraldehyde 3-phosphate + pyruvate + H(+) = 1-deoxy-D-xylulose 5-phosphate + CO2. Its pathway is metabolic intermediate biosynthesis; 1-deoxy-D-xylulose 5-phosphate biosynthesis; 1-deoxy-D-xylulose 5-phosphate from D-glyceraldehyde 3-phosphate and pyruvate: step 1/1. Its function is as follows. Catalyzes the acyloin condensation reaction between C atoms 2 and 3 of pyruvate and glyceraldehyde 3-phosphate to yield 1-deoxy-D-xylulose-5-phosphate (DXP). In Rhodopseudomonas palustris (strain BisB5), this protein is 1-deoxy-D-xylulose-5-phosphate synthase.